The sequence spans 453 residues: Tol-Pal system protein TolB (453 aa).

The signal sequence occupies residues 1 to 31; that stretch reads MINNLSISMTKVIKIILAIIIILFNTLSIFA.

The protein belongs to the TolB family. The Tol-Pal system is composed of five core proteins: the inner membrane proteins TolA, TolQ and TolR, the periplasmic protein TolB and the outer membrane protein Pal. They form a network linking the inner and outer membranes and the peptidoglycan layer.

Its subcellular location is the periplasm. In terms of biological role, part of the Tol-Pal system, which plays a role in outer membrane invagination during cell division and is important for maintaining outer membrane integrity. This Orientia tsutsugamushi (strain Ikeda) (Rickettsia tsutsugamushi) protein is Tol-Pal system protein TolB.